The following is a 74-amino-acid chain: uncharacterized protein (74 aa).

Composition is skewed to basic and acidic residues over residues 1-13 (MKKQ…HQLK) and 20-60 (IKAK…KSFE). The tract at residues 1–74 (MKKQKSIDKH…ESQMDWHQYK (74 aa)) is disordered. Residues 64–74 (NESQMDWHQYK) are compositionally biased toward polar residues.

This is an uncharacterized protein from Bacillus subtilis (strain 168).